We begin with the raw amino-acid sequence, 215 residues long: 3-isopropylmalate dehydratase small subunit (215 aa).

The protein belongs to the LeuD family. LeuD type 1 subfamily. Heterodimer of LeuC and LeuD.

It carries out the reaction (2R,3S)-3-isopropylmalate = (2S)-2-isopropylmalate. Its pathway is amino-acid biosynthesis; L-leucine biosynthesis; L-leucine from 3-methyl-2-oxobutanoate: step 2/4. In terms of biological role, catalyzes the isomerization between 2-isopropylmalate and 3-isopropylmalate, via the formation of 2-isopropylmaleate. This is 3-isopropylmalate dehydratase small subunit from Xanthomonas oryzae pv. oryzae (strain MAFF 311018).